The chain runs to 335 residues: Glyoxylate reductase (335 aa).

NADP(+) is bound by residues 159–162, 181–183, and 240–242; these read MGRI, SRS, and TGR. Residues R242 and E271 contribute to the active site. The active-site Proton donor is H290. An NADP(+)-binding site is contributed by 290 to 292; the sequence is HAA.

It belongs to the D-isomer specific 2-hydroxyacid dehydrogenase family. GyaR subfamily. As to quaternary structure, homodimer.

It localises to the cytoplasm. It catalyses the reaction glycolate + NAD(+) = glyoxylate + NADH + H(+). The polypeptide is Glyoxylate reductase (Aeropyrum pernix (strain ATCC 700893 / DSM 11879 / JCM 9820 / NBRC 100138 / K1)).